The following is a 122-amino-acid chain: Large ribosomal subunit protein uL14 (122 aa).

The protein belongs to the universal ribosomal protein uL14 family. As to quaternary structure, part of the 50S ribosomal subunit. Forms a cluster with proteins L3 and L19. In the 70S ribosome, L14 and L19 interact and together make contacts with the 16S rRNA in bridges B5 and B8.

Functionally, binds to 23S rRNA. Forms part of two intersubunit bridges in the 70S ribosome. The polypeptide is Large ribosomal subunit protein uL14 (Petrotoga mobilis (strain DSM 10674 / SJ95)).